Reading from the N-terminus, the 585-residue chain is T-cell surface protein tactile (585 aa).

The signal sequence occupies residues 1 to 21 (MEKKWKYCAVYYIIQIHFVKG). Topologically, residues 22–519 (VWEKTVNTEE…IVVNKPKDGM (498 aa)) are extracellular. An Ig-like V-type 1 domain is found at 38 to 125 (GSDVNLTCQT…YECMLVLYPE (88 aa)). N-linked (GlcNAc...) asparagine glycosylation is found at N42, N97, N107, N148, N156, N166, N200, N215, N277, N278, N300, N350, and N368. C45 and C118 are oxidised to a cystine. The region spanning 156–238 (NQTLEIPCFQ…YRLHLSPVQI (83 aa)) is the Ig-like V-type 2 domain. The cysteines at positions 163 and 247 are disulfide-linked. The Ig-like C2-type domain maps to 269-375 (PEIPVIVENN…VWNISSEKIT (107 aa)). C290 and C355 form a disulfide bridge. Composition is skewed to polar residues over residues 385–418 (TDPPLSVTESTLDTQPSPASSVSPARYPATSSVT), 426–452 (RPNTTPQPSNSSMTTRGFNYPWTSSGT), and 460–475 (RIPSETYSSSPSGAGS). The segment at 385 to 475 (TDPPLSVTES…YSSSPSGAGS (91 aa)) is disordered. N435 carries an N-linked (GlcNAc...) asparagine glycan. N497 carries an N-linked (GlcNAc...) asparagine glycan. The helical transmembrane segment at 520–540 (SWPVIVAALLFCCMILFGLGV) threads the bilayer. Topologically, residues 541–585 (RKWCQYQKEIMERPPPFKPPPPPIKYTCIQEPNESDLPYHEMETL) are cytoplasmic.

As to quaternary structure, homodimer; disulfide-linked. Interacts with PVR. Expressed on normal T-cell lines and clones, and some transformed T-cells, but no other cultured cell lines tested. It is expressed at very low levels on activated B-cells.

The protein localises to the membrane. Its function is as follows. May be involved in adhesive interactions of activated T and NK cells during the late phase of the immune response. Promotes NK cell-target adhesion by interacting with PVR present on target cells. May function at a time after T and NK cells have penetrated the endothelium using integrins and selectins, when they are actively engaging diseased cells and moving within areas of inflammation. In Homo sapiens (Human), this protein is T-cell surface protein tactile (CD96).